The sequence spans 265 residues: Hydroxyethylthiazole kinase (265 aa).

Residue M50 participates in substrate binding. Residues R125 and T171 each coordinate ATP. G198 is a binding site for substrate.

This sequence belongs to the Thz kinase family. Mg(2+) serves as cofactor.

The catalysed reaction is 5-(2-hydroxyethyl)-4-methylthiazole + ATP = 4-methyl-5-(2-phosphooxyethyl)-thiazole + ADP + H(+). The protein operates within cofactor biosynthesis; thiamine diphosphate biosynthesis; 4-methyl-5-(2-phosphoethyl)-thiazole from 5-(2-hydroxyethyl)-4-methylthiazole: step 1/1. Functionally, catalyzes the phosphorylation of the hydroxyl group of 4-methyl-5-beta-hydroxyethylthiazole (THZ). The sequence is that of Hydroxyethylthiazole kinase from Salmonella paratyphi B (strain ATCC BAA-1250 / SPB7).